Here is a 156-residue protein sequence, read N- to C-terminus: 3-hydroxyacyl-[acyl-carrier-protein] dehydratase FabZ (156 aa).

His-57 is an active-site residue.

This sequence belongs to the thioester dehydratase family. FabZ subfamily.

Its subcellular location is the cytoplasm. The enzyme catalyses a (3R)-hydroxyacyl-[ACP] = a (2E)-enoyl-[ACP] + H2O. Involved in unsaturated fatty acids biosynthesis. Catalyzes the dehydration of short chain beta-hydroxyacyl-ACPs and long chain saturated and unsaturated beta-hydroxyacyl-ACPs. The polypeptide is 3-hydroxyacyl-[acyl-carrier-protein] dehydratase FabZ (Anaeromyxobacter dehalogenans (strain 2CP-C)).